The chain runs to 357 residues: UDP-N-acetylglucosamine--N-acetylmuramyl-(pentapeptide) pyrophosphoryl-undecaprenol N-acetylglucosamine transferase (357 aa).

Residues 11–13 (TGG), asparagine 120, arginine 161, serine 188, and glutamine 281 contribute to the UDP-N-acetyl-alpha-D-glucosamine site.

It belongs to the glycosyltransferase 28 family. MurG subfamily.

The protein localises to the cell inner membrane. The catalysed reaction is di-trans,octa-cis-undecaprenyl diphospho-N-acetyl-alpha-D-muramoyl-L-alanyl-D-glutamyl-meso-2,6-diaminopimeloyl-D-alanyl-D-alanine + UDP-N-acetyl-alpha-D-glucosamine = di-trans,octa-cis-undecaprenyl diphospho-[N-acetyl-alpha-D-glucosaminyl-(1-&gt;4)]-N-acetyl-alpha-D-muramoyl-L-alanyl-D-glutamyl-meso-2,6-diaminopimeloyl-D-alanyl-D-alanine + UDP + H(+). It participates in cell wall biogenesis; peptidoglycan biosynthesis. In terms of biological role, cell wall formation. Catalyzes the transfer of a GlcNAc subunit on undecaprenyl-pyrophosphoryl-MurNAc-pentapeptide (lipid intermediate I) to form undecaprenyl-pyrophosphoryl-MurNAc-(pentapeptide)GlcNAc (lipid intermediate II). This is UDP-N-acetylglucosamine--N-acetylmuramyl-(pentapeptide) pyrophosphoryl-undecaprenol N-acetylglucosamine transferase from Prochlorococcus marinus (strain SARG / CCMP1375 / SS120).